Consider the following 368-residue polypeptide: Cobalt-precorrin-5B C(1)-methyltransferase (368 aa).

The protein belongs to the CbiD family.

It catalyses the reaction Co-precorrin-5B + S-adenosyl-L-methionine = Co-precorrin-6A + S-adenosyl-L-homocysteine. It functions in the pathway cofactor biosynthesis; adenosylcobalamin biosynthesis; cob(II)yrinate a,c-diamide from sirohydrochlorin (anaerobic route): step 6/10. Catalyzes the methylation of C-1 in cobalt-precorrin-5B to form cobalt-precorrin-6A. This Brucella anthropi (strain ATCC 49188 / DSM 6882 / CCUG 24695 / JCM 21032 / LMG 3331 / NBRC 15819 / NCTC 12168 / Alc 37) (Ochrobactrum anthropi) protein is Cobalt-precorrin-5B C(1)-methyltransferase.